The following is a 399-amino-acid chain: Beta sliding clamp (399 aa).

Belongs to the beta sliding clamp family. Forms a ring-shaped head-to-tail homodimer around DNA which binds and tethers DNA polymerases and other proteins to the DNA. The DNA replisome complex has a single clamp-loading complex (3 tau and 1 each of delta, delta', psi and chi subunits) which binds 3 Pol III cores (1 core on the leading strand and 2 on the lagging strand) each with a beta sliding clamp dimer. Additional proteins in the replisome are other copies of gamma, psi and chi, Ssb, DNA helicase and RNA primase.

The protein localises to the cytoplasm. Its function is as follows. Confers DNA tethering and processivity to DNA polymerases and other proteins. Acts as a clamp, forming a ring around DNA (a reaction catalyzed by the clamp-loading complex) which diffuses in an ATP-independent manner freely and bidirectionally along dsDNA. Initially characterized for its ability to contact the catalytic subunit of DNA polymerase III (Pol III), a complex, multichain enzyme responsible for most of the replicative synthesis in bacteria; Pol III exhibits 3'-5' exonuclease proofreading activity. The beta chain is required for initiation of replication as well as for processivity of DNA replication. In Mycolicibacterium paratuberculosis (strain ATCC BAA-968 / K-10) (Mycobacterium paratuberculosis), this protein is Beta sliding clamp (dnaN).